Here is a 67-residue protein sequence, read N- to C-terminus: Protein AaeX (67 aa).

2 helical membrane-spanning segments follow: residues 3–23 (LFPV…ELLL) and 43–63 (FVWH…YLIS).

It belongs to the AaeX family.

The protein resides in the cell membrane. The sequence is that of Protein AaeX from Escherichia coli (strain K12 / DH10B).